Reading from the N-terminus, the 363-residue chain is Disease resistance protein RBA1 (363 aa).

The TIR domain occupies 12-175; the sequence is PVPKVFLSFR…EIVKEVERVL (164 aa). NAD(+) is bound by residues 21-26 and G53; that span reads RGEEIR. E86 is a catalytic residue.

As to quaternary structure, homooligomer; homooligomerization is required for activity.

The protein localises to the cytoplasm. Its subcellular location is the nucleus. It is found in the nucleoplasm. The enzyme catalyses NAD(+) + H2O = ADP-D-ribose + nicotinamide + H(+). It catalyses the reaction NADP(+) + H2O = ADP-D-ribose 2'-phosphate + nicotinamide + H(+). In terms of biological role, disease resistance (R) protein that specifically recognizes the HopBA1 type III effector protein from P.syringae, and triggers cell death. Acts as a NAD(+) hydrolase (NADase): in response to pathogen-recognition, catalyzes cleavage of NAD(+) into ADP-D-ribose (ADPR) and nicotinamide; NAD(+) cleavage triggering a defense system that promotes cell death. In addition to ADPR, also generates a cyclization variant of cyclic ADPR (cADPR), termed v-cADPR, for which the cyclizing bond is unknown. Also able to hydrolyze NADP(+), but not other NAD(+)-related molecules. In Arabidopsis thaliana (Mouse-ear cress), this protein is Disease resistance protein RBA1.